The sequence spans 407 residues: Argininosuccinate synthase (407 aa).

Residues 13–21 (AYSGGLDTS) and Ala-40 contribute to the ATP site. Residues Tyr-91 and Ser-96 each contribute to the L-citrulline site. Residue Gly-121 coordinates ATP. Residues Thr-123, Asn-127, and Asp-128 each contribute to the L-aspartate site. Asn-127 lines the L-citrulline pocket. 5 residues coordinate L-citrulline: Arg-131, Ser-182, Ser-191, Glu-267, and Tyr-279.

This sequence belongs to the argininosuccinate synthase family. Type 1 subfamily. As to quaternary structure, homotetramer.

The protein resides in the cytoplasm. The enzyme catalyses L-citrulline + L-aspartate + ATP = 2-(N(omega)-L-arginino)succinate + AMP + diphosphate + H(+). It participates in amino-acid biosynthesis; L-arginine biosynthesis; L-arginine from L-ornithine and carbamoyl phosphate: step 2/3. The protein is Argininosuccinate synthase of Rhizobium etli (strain ATCC 51251 / DSM 11541 / JCM 21823 / NBRC 15573 / CFN 42).